The chain runs to 239 residues: MVFDLGVRKDWENLPETFVAGIKGSGCKIEVQTDVASLLQENGQSLDDVGAVIWSHWHFDHAGDPQTFPGTTDLIVGPGFKSNIIPAYPTVRDSHVNETAWEGRELIEIDFKGDKGLKIGKFDAYDFYGDGSFYLLSSPGHAVGHMSALARTTADPPSFMLLGGDIAHHCGEFRPSPYTPLPEMMSPNPLGRTLSACPGRLFLNIHPWKDPERPFFDPTTEPGWHLEAAEAKQSIDKLI.

Zn(2+)-binding residues include histidine 56, histidine 58, aspartate 60, histidine 61, histidine 141, and aspartate 165.

It belongs to the metallo-beta-lactamase superfamily.

In terms of biological role, gamma-lactamase; part of the Fusarium detoxification of benzoxazolinone cluster 2 (FDB2) involved in the degradation of benzoxazolinones produced by the host plant. Maize, wheat, and rye produce the 2 benzoxazinone phytoanticipins 2,4-dihy-droxy-7-methoxy-1,4-benzoxazin-3-one (DIMBOA) and 2,4-dihydroxy-1,4-benzoxazin-3-one (DIBOA) that, due to their inherent instability once released, spontaneously degrade to the more stable corresponding benzoxazolinones, 6-methoxy-2-benzoxazolinone (MBOA) and 2-benzoxazolinone (BOA), respectively. The first step in the detoxification of benzoxazolinones involves the hydrolysis of the cyclic ester bond of benzoxazolinones by the FDB1 cluster gamma-lactamase MBL1 to aminophenols. MBL1 is able to convert BOA into 2-aminophenol (2-AP), as well as MBOA into 5-methoxy-2-aminophenol (2-AMP). The FDB2 cluster N-malonyltransferase FDB2/NAT1 then metabolizes aminophenols via N-malonylation to non-toxic malonamic acids. FDB2/NAT1 converts 2-AP into N-(2-hydroxyphenyl) malonamic acid (HPMA) and 2-AMP into N-(2-hydroxy-4-methoxyphenyl) malonamic acid (HMPMA). The duplicated dienlactone hydrolases DLH1 and DLH2 may provide redundant function for hydrolyzing the lactone moiety in the BOA molecule. The roles of the amidases and other enzymes encoded by the 2 FDB clusters have not been identified so far. The sequence is that of Gamma-lactamase MBL2 from Gibberella moniliformis (strain M3125 / FGSC 7600) (Maize ear and stalk rot fungus).